The sequence spans 361 residues: Histidinol-phosphate aminotransferase (361 aa).

An N6-(pyridoxal phosphate)lysine modification is found at K221.

The protein belongs to the class-II pyridoxal-phosphate-dependent aminotransferase family. Histidinol-phosphate aminotransferase subfamily. Homodimer. Requires pyridoxal 5'-phosphate as cofactor.

The enzyme catalyses L-histidinol phosphate + 2-oxoglutarate = 3-(imidazol-4-yl)-2-oxopropyl phosphate + L-glutamate. It participates in amino-acid biosynthesis; L-histidine biosynthesis; L-histidine from 5-phospho-alpha-D-ribose 1-diphosphate: step 7/9. This chain is Histidinol-phosphate aminotransferase, found in Symbiobacterium thermophilum (strain DSM 24528 / JCM 14929 / IAM 14863 / T).